The sequence spans 910 residues: 2-oxoglutarate dehydrogenase E1 component (910 aa).

This sequence belongs to the alpha-ketoglutarate dehydrogenase family. As to quaternary structure, homodimer. Part of the 2-oxoglutarate dehydrogenase (OGDH) complex composed of E1 (2-oxoglutarate dehydrogenase), E2 (dihydrolipoamide succinyltransferase) and E3 (dihydrolipoamide dehydrogenase); the complex contains multiple copies of the three enzymatic components (E1, E2 and E3). It depends on thiamine diphosphate as a cofactor.

The catalysed reaction is N(6)-[(R)-lipoyl]-L-lysyl-[protein] + 2-oxoglutarate + H(+) = N(6)-[(R)-S(8)-succinyldihydrolipoyl]-L-lysyl-[protein] + CO2. In terms of biological role, E1 component of the 2-oxoglutarate dehydrogenase (OGDH) complex which catalyzes the decarboxylation of 2-oxoglutarate, the first step in the conversion of 2-oxoglutarate to succinyl-CoA and CO(2). This is 2-oxoglutarate dehydrogenase E1 component from Staphylococcus aureus (strain N315).